The sequence spans 180 residues: NAD(P)H-quinone oxidoreductase subunit I, chloroplastic (180 aa).

4Fe-4S ferredoxin-type domains are found at residues 55–84 (GRIH…VDWR) and 95–124 (LNYS…MTEE). [4Fe-4S] cluster is bound by residues Cys64, Cys67, Cys70, Cys74, Cys104, Cys107, Cys110, and Cys114.

The protein belongs to the complex I 23 kDa subunit family. NDH is composed of at least 16 different subunits, 5 of which are encoded in the nucleus. Requires [4Fe-4S] cluster as cofactor.

It is found in the plastid. The protein localises to the chloroplast thylakoid membrane. It catalyses the reaction a plastoquinone + NADH + (n+1) H(+)(in) = a plastoquinol + NAD(+) + n H(+)(out). The catalysed reaction is a plastoquinone + NADPH + (n+1) H(+)(in) = a plastoquinol + NADP(+) + n H(+)(out). NDH shuttles electrons from NAD(P)H:plastoquinone, via FMN and iron-sulfur (Fe-S) centers, to quinones in the photosynthetic chain and possibly in a chloroplast respiratory chain. The immediate electron acceptor for the enzyme in this species is believed to be plastoquinone. Couples the redox reaction to proton translocation, and thus conserves the redox energy in a proton gradient. This is NAD(P)H-quinone oxidoreductase subunit I, chloroplastic from Oryza nivara (Indian wild rice).